The sequence spans 226 residues: Protein B (226 aa).

Residues 37–100 (DNVQGTDYEK…FSTQHLANKV (64 aa)) are igG constant region-binding. 3 repeats span residues 158–168 (TKSKLDKEIWN), 169–179 (TRFTRDKKVLN), and 180–190 (VKEFKVYNTLN).

Its subcellular location is the secreted. In terms of biological role, protein B belongs to the group of bacterial Fc-binding protein. In Streptococcus agalactiae, this protein is Protein B.